The chain runs to 359 residues: Glutamine synthetase (359 aa).

The 80-residue stretch at 28–107 (VMAEYIWIDG…VLAACYTADG (80 aa)) folds into the GS beta-grasp domain. A GS catalytic domain is found at 114-359 (HRDACAKLLE…GIITETMFEH (246 aa)). Ser-273 bears the Phosphoserine mark. Position 303 is a phosphothreonine (Thr-303). The residue at position 305 (Ser-305) is a Phosphoserine.

The protein belongs to the glutamine synthetase family. In terms of assembly, homooctamer.

The protein localises to the cytoplasm. The enzyme catalyses L-glutamate + NH4(+) + ATP = L-glutamine + ADP + phosphate + H(+). This Schizosaccharomyces pombe (strain 972 / ATCC 24843) (Fission yeast) protein is Glutamine synthetase (gln1).